Reading from the N-terminus, the 431-residue chain is MTSANDKSTDTNVDSTQAEQKMAEKQNKLLSGIIERATKSGIGRKKLNPSAVESAVAKNMAEIHNNPTKLRLVVLGGGSFGTAMANLAARNGCDTTLWVRNKRTVKAMAKSQMNKKYLPGYKLDDRLKYSHELQAAVKDTDIIFIAVPGLAFRETLKSIAPFISGQSIVSLTKGMEKDTFALMSDIIKEELPEVNFGVMSGPNLAIEIMKNMPSATVIASESEPLRHAVQAALHSAFFRVFASDDIRGVELGGALKNIYAIAMGMAAAYEVGENTKAMILTRGLAEMSRFGVHAGANPLTFLGLSGVGDLYATCSSELSRNYRIGNMLGRGMTIDAAVKKLGQTAEGVNTIQQVHEKATKEGIYMPITHALHAVIYEDKAALGVALHLMEAGFRSDVEFVMEHDHSNASLTAQMQTANNQAKNEKTKPDNK.

The segment covering 1–19 (MTSANDKSTDTNVDSTQAE) has biased composition (polar residues). Residues 1–25 (MTSANDKSTDTNVDSTQAEQKMAEK) form a disordered region. NADPH-binding residues include serine 79, phenylalanine 80, arginine 100, and lysine 173. Sn-glycerol 3-phosphate contacts are provided by lysine 173 and glycine 201. Residue alanine 205 coordinates NADPH. 5 residues coordinate sn-glycerol 3-phosphate: lysine 256, aspartate 309, serine 319, arginine 320, and asparagine 321. Catalysis depends on lysine 256, which acts as the Proton acceptor. Arginine 320 serves as a coordination point for NADPH. Position 346 (glutamate 346) interacts with NADPH.

It belongs to the NAD-dependent glycerol-3-phosphate dehydrogenase family.

Its subcellular location is the cytoplasm. The enzyme catalyses sn-glycerol 3-phosphate + NAD(+) = dihydroxyacetone phosphate + NADH + H(+). The catalysed reaction is sn-glycerol 3-phosphate + NADP(+) = dihydroxyacetone phosphate + NADPH + H(+). The protein operates within membrane lipid metabolism; glycerophospholipid metabolism. Functionally, catalyzes the reduction of the glycolytic intermediate dihydroxyacetone phosphate (DHAP) to sn-glycerol 3-phosphate (G3P), the key precursor for phospholipid synthesis. The polypeptide is Glycerol-3-phosphate dehydrogenase [NAD(P)+] (Psychrobacter arcticus (strain DSM 17307 / VKM B-2377 / 273-4)).